Consider the following 206-residue polypeptide: ATP-dependent dethiobiotin synthetase BioD (206 aa).

ATP is bound at residue 12 to 17 (GVGKTI). Thr-16 provides a ligand contact to Mg(2+). The active site involves Lys-32. Positions 46 and 98 each coordinate Mg(2+). Residue 98–101 (EGAG) participates in ATP binding.

This sequence belongs to the dethiobiotin synthetase family. Homodimer. The cofactor is Mg(2+).

Its subcellular location is the cytoplasm. The catalysed reaction is (7R,8S)-7,8-diammoniononanoate + CO2 + ATP = (4R,5S)-dethiobiotin + ADP + phosphate + 3 H(+). Its pathway is cofactor biosynthesis; biotin biosynthesis; biotin from 7,8-diaminononanoate: step 1/2. In terms of biological role, catalyzes a mechanistically unusual reaction, the ATP-dependent insertion of CO2 between the N7 and N8 nitrogen atoms of 7,8-diaminopelargonic acid (DAPA, also called 7,8-diammoniononanoate) to form a ureido ring. The sequence is that of ATP-dependent dethiobiotin synthetase BioD from Novosphingobium aromaticivorans (strain ATCC 700278 / DSM 12444 / CCUG 56034 / CIP 105152 / NBRC 16084 / F199).